The chain runs to 328 residues: GMP reductase (328 aa).

Cys176 serves as the catalytic Thioimidate intermediate. 205–228 (IIADGGIRTHGDIAKSIRFGASMI) is a binding site for NADP(+).

Belongs to the IMPDH/GMPR family. GuaC type 2 subfamily.

The catalysed reaction is IMP + NH4(+) + NADP(+) = GMP + NADPH + 2 H(+). Functionally, catalyzes the irreversible NADPH-dependent deamination of GMP to IMP. It functions in the conversion of nucleobase, nucleoside and nucleotide derivatives of G to A nucleotides, and in maintaining the intracellular balance of A and G nucleotides. This Streptococcus pneumoniae (strain CGSP14) protein is GMP reductase.